The sequence spans 367 residues: Cystinosin (367 aa).

A signal peptide spans 1–22; the sequence is MRRNWLLILTLFLLMFIEKYES. The Lumenal portion of the chain corresponds to 23–125; the sequence is TVSLTAPPTV…LVIHSRIVSI (103 aa). N-linked (GlcNAc...) asparagine glycosylation is found at asparagine 36, asparagine 51, asparagine 66, asparagine 84, asparagine 104, and asparagine 107. Residues 123–189 enclose the PQ-loop 1 domain; it reads VSIINQVIGW…LLWVPYIQEE (67 aa). A helical transmembrane segment spans residues 126–150; sequence INQVIGWIYFMAWSVSFYPQVIQNW. Topologically, residues 151 to 159 are cytoplasmic; sequence RRKSVIGLS. A helical transmembrane segment spans residues 160-179; the sequence is FDFLALNLTGFVAYSVFNIG. Asparagine 166 provides a ligand contact to L-cystine. Residues 180–202 are Lumenal-facing; the sequence is LLWVPYIQEEFLLKYPNGVNPVD. Residues 203–225 traverse the membrane as a helical segment; that stretch reads SNDAFFSLHAVALTLIVILQCCL. Position 205 (aspartate 205) interacts with H(+). At 226 to 234 the chain is on the cytoplasmic side; sequence YERGNQRVS. Residues 235–257 traverse the membrane as a helical segment; the sequence is WPSIGFLVLAWLFVLVTMIVAAV. Residues 258–263 are Lumenal-facing; it reads GITTWL. The 66-residue stretch at 263–328 folds into the PQ-loop 2 domain; that stretch reads LQFLFCFSYI…QSYNNDQWTL (66 aa). Residues 264-289 form a helical membrane-spanning segment; sequence QFLFCFSYIKLIITLIKYFPQAYMNF. L-cystine is bound by residues lysine 273, lysine 280, and tyrosine 281. The Cytoplasmic portion of the chain corresponds to 290–298; that stretch reads YYKSTKGWS. The helical transmembrane segment at 299–308 threads the bilayer; the sequence is IGGVLLDFTG. Aspartate 305 is a binding site for L-cystine. Aspartate 305 is a binding site for H(+). Residues 309–331 lie on the Lumenal side of the membrane; that stretch reads GSFSLLQMFLQSYNNDQWTLIFG. A helical membrane pass occupies residues 332 to 354; it reads DPTKFGLGVFTIFFDVVFFIQHF. H(+) is bound at residue aspartate 346. Topologically, residues 355–367 are cytoplasmic; it reads YLYRKKPGYDQLN. Positions 362–366 match the Lysosomal targeting motif motif; it reads GYDQL.

It belongs to the cystinosin family. As to quaternary structure, interacts with components of the V-ATPase complex. Interacts with components of the Ragulator complex. Interacts with RRAGA/RagA and RRAGC/RagC. Interacts with AP-3 complex subunit mu (AP3M1 or AP3M2).

The protein resides in the lysosome membrane. Its subcellular location is the melanosome membrane. The catalysed reaction is L-cystine(out) + H(+)(out) = L-cystine(in) + H(+)(in). With respect to regulation, switches between a lumen- and a cytosol-open conformation: pH induces conformational changes and shifts the equilibrium to facilitate the transition between the lumen- and cytosol-open conformation, thereby promoting cystine transport. Protonation of specific aspartate residues (Asp-205, Asp-305 and Asp-346) favors the cytosol-open conformation. In terms of biological role, cystine/H(+) symporter that mediates export of cystine, the oxidized dimer of cysteine, from lysosomes. Plays an important role in melanin synthesis by catalyzing cystine export from melanosomes, possibly by inhibiting pheomelanin synthesis. In addition to cystine export, also acts as a positive regulator of mTORC1 signaling in kidney proximal tubular cells, via interactions with components of the v-ATPase and Ragulator complexes. Also involved in small GTPase-regulated vesicle trafficking and lysosomal localization of LAMP2A, independently of cystine transporter activity. This Mus musculus (Mouse) protein is Cystinosin.